A 622-amino-acid polypeptide reads, in one-letter code: V-type ATP synthase subunit I 1 (622 aa).

8 helical membrane passes run 306–326 (WVNLISPLMNFLGTVPGYWEV), 328–348 (ISGFFLLFFGVFFSIIFADAG), 373–393 (PAWCLGLYLGTLTMVWGALVC), 428–448 (QMHVCFFLGLLHLCLGHLIVV), 459–479 (AEFGSLLMLGGMYVVVLNLIV), 485–505 (PLTGMIVGSIIAGFVLNFIFV), 532–552 (VFADVMSYIRLWAVGLAGGAI), and 562–582 (PLFANFLAFLGIVLLLFGHGL).

Belongs to the V-ATPase 116 kDa subunit family.

It is found in the cell membrane. Its function is as follows. Produces ATP from ADP in the presence of a proton gradient across the membrane. The chain is V-type ATP synthase subunit I 1 (atpI1) from Treponema pallidum (strain Nichols).